Reading from the N-terminus, the 259-residue chain is Undecaprenyl-diphosphatase 3 (259 aa).

Transmembrane regions (helical) follow at residues 1–21, 39–59, 71–91, 99–119, 133–153, 174–194, 208–228, and 236–256; these read MNWLEAFILGIIQGLTEFLPI, AGLFLDTMLHIGTLLAVFIYY, FSKLMLLLIVGTIPAVVIGLL, ISKTGITIGWEFLVTGFFLYM, ITYKDAFIIGSFXAVAIFPAI, AYFSFLLSTPAIVGAIILQFV, SLIVGTLSAAFFGYIAVSWMI, and LKVFAYYVWGLGILILTLQFT.

It belongs to the UppP family.

The protein resides in the cell membrane. The enzyme catalyses di-trans,octa-cis-undecaprenyl diphosphate + H2O = di-trans,octa-cis-undecaprenyl phosphate + phosphate + H(+). In terms of biological role, catalyzes the dephosphorylation of undecaprenyl diphosphate (UPP). Confers resistance to bacitracin. This is Undecaprenyl-diphosphatase 3 from Bacillus cereus (strain ATCC 10987 / NRS 248).